The sequence spans 97 residues: uncharacterized protein (97 aa).

This is an uncharacterized protein from Mycobacterium tuberculosis (strain CDC 1551 / Oshkosh).